Here is a 743-residue protein sequence, read N- to C-terminus: Beta-galactosidase (743 aa).

Glutamate 388 serves as the catalytic Proton donor. Residue glutamate 453 is the Nucleophile of the active site.

It belongs to the glycosyl hydrolase 2 family. As to quaternary structure, homodimer.

The catalysed reaction is Hydrolysis of terminal non-reducing beta-D-galactose residues in beta-D-galactosides.. Its function is as follows. Beta-galactosidase. This chain is Beta-galactosidase (lacZ), found in Thermoanaerobacter pseudethanolicus (strain ATCC 33223 / 39E) (Clostridium thermohydrosulfuricum).